The following is a 557-amino-acid chain: Iron-sulfur cluster assembly SufBD family protein ABCI8, chloroplastic (557 aa).

Positions 1–47 (MASLLANGISSFSPQPTSDSSKSPKGFHPKPESLKFPSPKSLNPTRP) are disordered. A chloroplast-targeting transit peptide spans 1 to 52 (MASLLANGISSFSPQPTSDSSKSPKGFHPKPESLKFPSPKSLNPTRPIFKLR). Low complexity predominate over residues 10-24 (SSFSPQPTSDSSKSP).

Belongs to the iron-sulfur cluster assembly SufBD family.

The protein localises to the plastid. Its subcellular location is the chloroplast. Involved in light signaling, probably by mediating the transport and correct distribution of protoporphyrin IX, a chlorophyll precursor, in response to far-red light. The protein is Iron-sulfur cluster assembly SufBD family protein ABCI8, chloroplastic (ABCI8) of Arabidopsis thaliana (Mouse-ear cress).